Here is a 271-residue protein sequence, read N- to C-terminus: Thiazole synthase (271 aa).

Lys104 acts as the Schiff-base intermediate with DXP in catalysis. Residues Gly165, 192–193, and 214–215 each bind 1-deoxy-D-xylulose 5-phosphate; these read AG and NT.

This sequence belongs to the ThiG family. As to quaternary structure, homotetramer. Forms heterodimers with either ThiH or ThiS.

Its subcellular location is the cytoplasm. It carries out the reaction [ThiS sulfur-carrier protein]-C-terminal-Gly-aminoethanethioate + 2-iminoacetate + 1-deoxy-D-xylulose 5-phosphate = [ThiS sulfur-carrier protein]-C-terminal Gly-Gly + 2-[(2R,5Z)-2-carboxy-4-methylthiazol-5(2H)-ylidene]ethyl phosphate + 2 H2O + H(+). It functions in the pathway cofactor biosynthesis; thiamine diphosphate biosynthesis. Its function is as follows. Catalyzes the rearrangement of 1-deoxy-D-xylulose 5-phosphate (DXP) to produce the thiazole phosphate moiety of thiamine. Sulfur is provided by the thiocarboxylate moiety of the carrier protein ThiS. In vitro, sulfur can be provided by H(2)S. This is Thiazole synthase from Burkholderia lata (strain ATCC 17760 / DSM 23089 / LMG 22485 / NCIMB 9086 / R18194 / 383).